The chain runs to 227 residues: Urease accessory protein UreG (227 aa).

Over residues 1–10 (MHLDHAHTHD) the composition is skewed to basic and acidic residues. The interval 1–22 (MHLDHAHTHDGPSAVSADAHRP) is disordered. GTP is bound at residue 35–42 (GPVGSGKT).

The protein belongs to the SIMIBI class G3E GTPase family. UreG subfamily. In terms of assembly, homodimer. UreD, UreF and UreG form a complex that acts as a GTP-hydrolysis-dependent molecular chaperone, activating the urease apoprotein by helping to assemble the nickel containing metallocenter of UreC. The UreE protein probably delivers the nickel.

The protein localises to the cytoplasm. Functionally, facilitates the functional incorporation of the urease nickel metallocenter. This process requires GTP hydrolysis, probably effectuated by UreG. The chain is Urease accessory protein UreG from Streptomyces avermitilis (strain ATCC 31267 / DSM 46492 / JCM 5070 / NBRC 14893 / NCIMB 12804 / NRRL 8165 / MA-4680).